Here is a 187-residue protein sequence, read N- to C-terminus: Putative glutathione-dependent formaldehyde-activating enzyme (187 aa).

Residues 20–166 form the CENP-V/GFA domain; sequence FPGGKLYCHC…FESVGLKTYD (147 aa). 7 residues coordinate Zn(2+): C27, C29, C48, C50, C53, C95, and C98.

Belongs to the Gfa family. It depends on Zn(2+) as a cofactor.

The catalysed reaction is S-(hydroxymethyl)glutathione = glutathione + formaldehyde. It participates in one-carbon metabolism; formaldehyde degradation; formate from formaldehyde (glutathione route): step 1/3. Catalyzes the condensation of formaldehyde and glutathione to S-hydroxymethylglutathione. The sequence is that of Putative glutathione-dependent formaldehyde-activating enzyme from Talaromyces marneffei (strain ATCC 18224 / CBS 334.59 / QM 7333) (Penicillium marneffei).